The primary structure comprises 202 residues: Endoribonuclease YbeY (202 aa).

Zn(2+) is bound by residues H120, H124, and H130.

This sequence belongs to the endoribonuclease YbeY family. Requires Zn(2+) as cofactor.

The protein resides in the cytoplasm. In terms of biological role, single strand-specific metallo-endoribonuclease involved in late-stage 70S ribosome quality control and in maturation of the 3' terminus of the 16S rRNA. In Corynebacterium kroppenstedtii (strain DSM 44385 / JCM 11950 / CIP 105744 / CCUG 35717), this protein is Endoribonuclease YbeY.